We begin with the raw amino-acid sequence, 133 residues long: Fatty acid-binding protein, heart (133 aa).

N-acetylvaline is present on V2. Residue T8 is modified to Phosphothreonine. Position 20 is a phosphotyrosine; by Tyr-kinases (Y20). Position 23 is a phosphoserine (S23). T30 is subject to Phosphothreonine. S83 is modified (phosphoserine). A (9Z)-octadecenoate-binding site is contributed by 127–129 (RTY). Position 127 to 129 (127 to 129 (RTY)) interacts with hexadecanoate. 127-129 (RTY) contacts octadecanoate.

This sequence belongs to the calycin superfamily. Fatty-acid binding protein (FABP) family.

It is found in the cytoplasm. Functionally, FABPs are thought to play a role in the intracellular transport of long-chain fatty acids and their acyl-CoA esters. The protein is Fatty acid-binding protein, heart (FABP3) of Sus scrofa (Pig).